The sequence spans 243 residues: Ribosomal RNA small subunit methyltransferase G (243 aa).

S-adenosyl-L-methionine-binding positions include glycine 79, phenylalanine 84, 130–131, and arginine 150; that span reads AE. The tract at residues 219 to 243 is disordered; sequence EKKKQTPNKYPRKPGTPGKDPIGKK.

Belongs to the methyltransferase superfamily. RNA methyltransferase RsmG family.

It localises to the cytoplasm. Functionally, specifically methylates the N7 position of a guanine in 16S rRNA. This Pediococcus pentosaceus (strain ATCC 25745 / CCUG 21536 / LMG 10740 / 183-1w) protein is Ribosomal RNA small subunit methyltransferase G.